We begin with the raw amino-acid sequence, 170 residues long: Large ribosomal subunit protein uL11 (170 aa).

The protein belongs to the universal ribosomal protein uL11 family. In terms of assembly, part of the ribosomal stalk of the 50S ribosomal subunit. Interacts with L10 and the large rRNA to form the base of the stalk. L10 forms an elongated spine to which L12 dimers bind in a sequential fashion forming a multimeric L10(L12)X complex.

Forms part of the ribosomal stalk which helps the ribosome interact with GTP-bound translation factors. The chain is Large ribosomal subunit protein uL11 from Desulfurococcus amylolyticus (strain DSM 18924 / JCM 16383 / VKM B-2413 / 1221n) (Desulfurococcus kamchatkensis).